The sequence spans 291 residues: Methionine aminopeptidase (291 aa).

Histidine 118 is a binding site for substrate. 3 residues coordinate a divalent metal cation: aspartate 135, aspartate 146, and histidine 209. Histidine 216 is a substrate binding site. 2 residues coordinate a divalent metal cation: glutamate 241 and glutamate 273.

This sequence belongs to the peptidase M24A family. Methionine aminopeptidase type 1 subfamily. Monomer. The cofactor is Co(2+). Zn(2+) serves as cofactor. It depends on Mn(2+) as a cofactor. Requires Fe(2+) as cofactor.

It carries out the reaction Release of N-terminal amino acids, preferentially methionine, from peptides and arylamides.. Its function is as follows. Removes the N-terminal methionine from nascent proteins. The N-terminal methionine is often cleaved when the second residue in the primary sequence is small and uncharged (Met-Ala-, Cys, Gly, Pro, Ser, Thr, or Val). Requires deformylation of the N(alpha)-formylated initiator methionine before it can be hydrolyzed. This is Methionine aminopeptidase from Chlamydia pneumoniae (Chlamydophila pneumoniae).